Reading from the N-terminus, the 196-residue chain is ATP-dependent Clp protease proteolytic subunit (196 aa).

The active-site Nucleophile is the Ser-98. His-123 is an active-site residue.

Belongs to the peptidase S14 family. In terms of assembly, fourteen ClpP subunits assemble into 2 heptameric rings which stack back to back to give a disk-like structure with a central cavity, resembling the structure of eukaryotic proteasomes.

Its subcellular location is the cytoplasm. The catalysed reaction is Hydrolysis of proteins to small peptides in the presence of ATP and magnesium. alpha-casein is the usual test substrate. In the absence of ATP, only oligopeptides shorter than five residues are hydrolyzed (such as succinyl-Leu-Tyr-|-NHMec, and Leu-Tyr-Leu-|-Tyr-Trp, in which cleavage of the -Tyr-|-Leu- and -Tyr-|-Trp bonds also occurs).. Cleaves peptides in various proteins in a process that requires ATP hydrolysis. Has a chymotrypsin-like activity. Plays a major role in the degradation of misfolded proteins. This is ATP-dependent Clp protease proteolytic subunit from Sulfurimonas denitrificans (strain ATCC 33889 / DSM 1251) (Thiomicrospira denitrificans (strain ATCC 33889 / DSM 1251)).